A 511-amino-acid chain; its full sequence is Lysine--tRNA ligase (511 aa).

Residues E421 and E428 each contribute to the Mg(2+) site.

This sequence belongs to the class-II aminoacyl-tRNA synthetase family. In terms of assembly, homodimer. Mg(2+) is required as a cofactor.

It localises to the cytoplasm. It carries out the reaction tRNA(Lys) + L-lysine + ATP = L-lysyl-tRNA(Lys) + AMP + diphosphate. The protein is Lysine--tRNA ligase of Aeromonas hydrophila subsp. hydrophila (strain ATCC 7966 / DSM 30187 / BCRC 13018 / CCUG 14551 / JCM 1027 / KCTC 2358 / NCIMB 9240 / NCTC 8049).